A 746-amino-acid polypeptide reads, in one-letter code: UvrABC system protein C (746 aa).

Positions 18–97 (AKPGVYKWRD…IKEFDPRFNV (80 aa)) constitute a GIY-YIG domain. In terms of domain architecture, UVR spans 211–246 (RPYIAQLTRDMKEASAELEFEKAARLRDQIQMLETV). The tract at residues 557–577 (ANGNDNGEGGSDISGKGHAVP) is disordered.

The protein belongs to the UvrC family. As to quaternary structure, interacts with UvrB in an incision complex.

Its subcellular location is the cytoplasm. Functionally, the UvrABC repair system catalyzes the recognition and processing of DNA lesions. UvrC both incises the 5' and 3' sides of the lesion. The N-terminal half is responsible for the 3' incision and the C-terminal half is responsible for the 5' incision. The chain is UvrABC system protein C from Bifidobacterium longum (strain DJO10A).